Here is a 258-residue protein sequence, read N- to C-terminus: MAPVVTVPENASPELVEKAKNLASVWQLNFDGNVRHGLVLMQSEAHLALKQLDEPKVGEVLVDFASDALTFRRLHGGGKKEAVAKAVGLKGQSEWRVLDATAGLGRDAFVLASLGCRVDMIERSPVVAALLADGLERAHHSAELSAWLPQRMRLHHGIAVDLMANWCNEPANLAPDVVYLDPMFPHRKKSAAVKKEMRLFQQLLGPDEDADGLLAPALALAKKRVVVKRPAGAPFLAQQKPHIEMQGKANRFDVYLIN.

Residues 106–107 (RD), 122–123 (ER), and Asp-181 each bind S-adenosyl-L-methionine.

This sequence belongs to the methyltransferase superfamily. RsmJ family.

It localises to the cytoplasm. The catalysed reaction is guanosine(1516) in 16S rRNA + S-adenosyl-L-methionine = N(2)-methylguanosine(1516) in 16S rRNA + S-adenosyl-L-homocysteine + H(+). Specifically methylates the guanosine in position 1516 of 16S rRNA. The chain is Ribosomal RNA small subunit methyltransferase J from Pseudoalteromonas atlantica (strain T6c / ATCC BAA-1087).